The chain runs to 235 residues: Nucleoprotein (235 aa).

RNA-binding residues include Phe17, Asp18, Ala47, Lys50, Asn75, His76, Arg81, Arg94, Ile124, Pro126, Glu129, Arg167, Tyr177, Lys179, Lys180, Arg183, Gln184, and Arg185.

It belongs to the orthobunyavirus nucleocapsid protein family. Homotetramer. Binds the viral genomic RNA. Interacts with host PABP1.

The protein localises to the virion. In terms of biological role, encapsidates the genome protecting it from nucleases. The encapsidated genomic RNA is termed the nucleocapsid (NC) and serves as template for transcription and replication. The NC have a helical organization. Seems to participate in the nuclear relocalization of host PABP1, thereby inhibiting host cellular translation. The protein is Nucleoprotein (N) of Cervidae (Deer).